Here is a 146-residue protein sequence, read N- to C-terminus: 3-dehydroquinate dehydratase (146 aa).

Y23 acts as the Proton acceptor in catalysis. Substrate-binding residues include N74, H80, and D87. H100 acts as the Proton donor in catalysis. Residues 101–102 (IS) and R111 contribute to the substrate site.

It belongs to the type-II 3-dehydroquinase family. Homododecamer.

The enzyme catalyses 3-dehydroquinate = 3-dehydroshikimate + H2O. It functions in the pathway metabolic intermediate biosynthesis; chorismate biosynthesis; chorismate from D-erythrose 4-phosphate and phosphoenolpyruvate: step 3/7. Functionally, catalyzes a trans-dehydration via an enolate intermediate. This chain is 3-dehydroquinate dehydratase, found in Bacillus cytotoxicus (strain DSM 22905 / CIP 110041 / 391-98 / NVH 391-98).